Consider the following 106-residue polypeptide: Small ribosomal subunit protein uS10 (106 aa).

It belongs to the universal ribosomal protein uS10 family. Part of the 30S ribosomal subunit.

In terms of biological role, involved in the binding of tRNA to the ribosomes. The sequence is that of Small ribosomal subunit protein uS10 from Archaeoglobus fulgidus (strain ATCC 49558 / DSM 4304 / JCM 9628 / NBRC 100126 / VC-16).